The primary structure comprises 318 residues: Probable aminopeptidase YbaC (318 aa).

The Nucleophile role is filled by serine 115. Aspartate 266 is an active-site residue. Histidine 296 (proton donor) is an active-site residue.

This sequence belongs to the peptidase S33 family.

Its function is as follows. Probable aminopeptidase. The polypeptide is Probable aminopeptidase YbaC (ybaC) (Bacillus subtilis (strain 168)).